The chain runs to 125 residues: Large ribosomal subunit protein bL12 (125 aa).

The protein belongs to the bacterial ribosomal protein bL12 family. In terms of assembly, homodimer. Part of the ribosomal stalk of the 50S ribosomal subunit. Forms a multimeric L10(L12)X complex, where L10 forms an elongated spine to which 2 to 4 L12 dimers bind in a sequential fashion. Binds GTP-bound translation factors.

In terms of biological role, forms part of the ribosomal stalk which helps the ribosome interact with GTP-bound translation factors. Is thus essential for accurate translation. The polypeptide is Large ribosomal subunit protein bL12 (Coprothermobacter proteolyticus (strain ATCC 35245 / DSM 5265 / OCM 4 / BT)).